A 53-amino-acid chain; its full sequence is MRNKERNFPNQNNNKFEGEPRAKAEYASKRANGTTNTHPQERMHASGKRDDNF.

Residues 1 to 53 (MRNKERNFPNQNNNKFEGEPRAKAEYASKRANGTTNTHPQERMHASGKRDDNF) form a disordered region. 2 stretches are compositionally biased toward basic and acidic residues: residues 16–28 (FEGEPRAKAEYAS) and 39–53 (PQERMHASGKRDDNF).

It belongs to the SspK family.

It is found in the spore core. The protein is Small, acid-soluble spore protein K of Geobacillus sp. (strain WCH70).